Reading from the N-terminus, the 406-residue chain is Odorant receptor 10a (406 aa).

The Cytoplasmic portion of the chain corresponds to 1–45; it reads MSEWLRFLKRDQQLDVYFFAVPRLSLDIMGYWPGKTGDTWPWRSL. The helical transmembrane segment at 46–66 threads the bilayer; sequence IHFAILAIGVATELHAGMCFL. Residues 67-74 are Extracellular-facing; the sequence is DRQQITLA. A helical membrane pass occupies residues 75–95; the sequence is LETLCPAGTSAVTLLKMFLML. The Cytoplasmic segment spans residues 96-143; sequence RFRQDLSIMWNRLRGLLFDPNWERPEQRDIRLKHSAMAARINFWPLSA. A helical transmembrane segment spans residues 144–164; the sequence is GFFTCTTYNLKPILIAMILYL. The Extracellular portion of the chain corresponds to 165-189; that stretch reads QNRYEDFVWFTPFNMTMPKVLLNYP. Asn178 carries N-linked (GlcNAc...) asparagine glycosylation. Residues 190-210 form a helical membrane-spanning segment; it reads FFPLTYIFIAYTGYVTIFMFG. Topologically, residues 211-281 are cytoplasmic; it reads GCDGFYFEFC…LTRFFRDRYT (71 aa). The chain crosses the membrane as a helical span at residues 282–302; that stretch reads IITLAHFVSAAMVIGFSMVNL. Topologically, residues 303–308 are extracellular; that stretch reads LTLGNN. Residues 309–329 form a helical membrane-spanning segment; the sequence is GLGAMLYVAYTVAALSQLLVY. At 330–372 the chain is on the cytoplasmic side; it reads CYGGTLVAESSTGLCRAMFSCPWQLFKPKQRRLVQLLILRSQR. Residues 373–393 form a helical membrane-spanning segment; sequence PVSMAVPFFSPSLATFAAILQ. The Extracellular segment spans residues 394–406; that stretch reads TSGSIIALVKSFQ.

It belongs to the insect chemoreceptor superfamily. Heteromeric odorant receptor channel (TC 1.A.69) family. Or1a subfamily. As to quaternary structure, interacts with Orco. Complexes exist early in the endomembrane system in olfactory sensory neurons (OSNs), coupling these complexes to the conserved ciliary trafficking pathway. Expressed in olfactory sensory neurons in the antenna.

The protein resides in the cell membrane. Functionally, odorant receptor which mediates acceptance or avoidance behavior, depending on its substrates. The odorant receptor repertoire encodes a large collection of odor stimuli that vary widely in identity, intensity, and duration. May form a complex with Orco to form odorant-sensing units, providing sensitive and prolonged odorant signaling and calcium permeability. Involved in the behavioral responses to esters, and specifically to ethyl hexanoate, benzaldehyde, and acetophenone. In Drosophila melanogaster (Fruit fly), this protein is Odorant receptor 10a (Or10a).